We begin with the raw amino-acid sequence, 420 residues long: MTMEKGMSSGEGLPSRSSQVSAGKITAKELETKQSYKEKRGGFVLVHAGAGYHSESKAKEYKHVCKRACQKAIEKLQAGALATDAVTAALVELEDSPFTNAGMGSNLNLLGEIECDASIMDGKSLNFGAVGALSGIKNPVSVANRLLCEGQKGKLSAGRIPPCFLVGEGAYRWAVDHGIPSCPPNIMTTRFSLAAFKRNKRKLELAERVDTDFMQLKKRRQSSEKENDSGTLDTVGAVVVDHEGNVAAAVSSGGLALKHPGRVGQAALYGCGCWAENTGAHNPYSTAVSTSGCGEHLVRTILARECSHALQAEDAHQALLETMQNKFISSPFLASEDGVLGGVIVLRSCRCSAEPDSSQNKQTLLVEFLWSHTTESMCVGYMSAQDGKAKTHISRLPPGAVAGQSVAIEGGVCRLESPVN.

The interval 1 to 23 is disordered; that stretch reads MTMEKGMSSGEGLPSRSSQVSAG. Residue T234 is the Nucleophile of the active site.

This sequence belongs to the Ntn-hydrolase family. In terms of assembly, intramolecular proteolysis generates 2 subunits, alpha and beta, which reassemble through a non-covalent association to form the fully active enzyme.

In terms of biological role, protease responsible for KMT2A/MLL1 processing and activation. It also activates KMT2D/MLL2. Through substrate activation, it controls the expression of HOXA genes, and the expression of key cell cycle regulators including CCNA1, CCNB1, CCNE1 and CDKN2A. The polypeptide is Threonine aspartase 1 (TASP1) (Homo sapiens (Human)).